The chain runs to 58 residues: Apelin receptor early endogenous ligand (58 aa).

Positions 1 to 22 (MRFFHPLYLLLLLLTVLVLISA) are cleaved as a signal peptide.

Belongs to the Elabela/Toddler family. As to quaternary structure, interacts with aplnra and aplnrb. Expressed ubiquitously during late blastula and gastrula stages and becomes restricted to the lateral mesoderm, endoderm, and anterior and posterior notochord after gastrulation.

The protein localises to the secreted. It localises to the extracellular space. Peptide hormone that functions as endogenous ligand for the G-protein-coupled apelin receptor (aplnra and/or aplnrb), that plays a role in the regulation of normal cardiovascular function and fluid homeostasis. Functions as a balanced agonist activating both G(i) protein pathway and beta-arrestin pathway of APLNR. Downstream G proteins activation, apelin can inhibit cAMP production and activate key intracellular effectors such as ERKs. On the other hand, APLNR activation induces beta-arrestin recruitment to the membrane leading to desensitization and internalization of the receptor. Required for mesendodermal differentiation, blood vessels formation and heart morphogenesis during early development and for adult cardiovascular homeostasis. Acts as a motogen by promoting mesendodermal cell migration during gastrulation by binding and activating the apelin receptor. Acts as an early embryonic regulator of cellular movement with a role in migration and development of cardiac progenitor cells. May act as a chemoattractant for the activation of angioblast migration toward the embryonic midline, i.e. the position of the future vessel formation, during vasculogenesis. Positively regulates sinus venosus (SV)-derived endothelial cells migration into the developing heart to promote coronary blood vessel sprouting. Involved in cardioprotective functions during heart failure. Mediates myocardial contractility in an ERK1/2-dependent manner. This is Apelin receptor early endogenous ligand from Danio rerio (Zebrafish).